The primary structure comprises 299 residues: UBX domain-containing protein 1 (299 aa).

3 disordered regions span residues A39–P61, K127–E176, and E191–K218. Residues D46–P61 are compositionally biased toward low complexity. Positions A111 to R179 form a coiled coil. Over residues A128–E176 the composition is skewed to basic and acidic residues. The segment covering P201–P213 has biased composition (low complexity). Residues K218–L295 enclose the UBX domain.

Interacts with cdc-48.1 (via N-terminus) and cdc-48.2 (via N-terminus) in vitro; the interaction with cdc-48.1 is not detected in vivo. In terms of tissue distribution, expressed in the germline (at protein level). Expressed in spermatocytes but not in mature sperm (at protein level). Ubiquitously expressed. Predominantly expressed in the spermatheca.

The protein localises to the cytoplasm. The protein resides in the perinuclear region. Ubiquitin-binding protein which acts as an adapter for ATPase cdc-48.1 and/or cdc-48.2, conferring substrate specificity. Together with ubxn-2 and ubxn-3, plays a role in hermaphrodite spermatogenesis probably by promoting the degradation of sex determination terminal factor tra-1. The chain is UBX domain-containing protein 1 from Caenorhabditis elegans.